A 293-amino-acid chain; its full sequence is Ribosomal protein L11 methyltransferase (293 aa).

Residues Thr145, Gly166, Asp188, and Asn230 each coordinate S-adenosyl-L-methionine.

Belongs to the methyltransferase superfamily. PrmA family.

It is found in the cytoplasm. It carries out the reaction L-lysyl-[protein] + 3 S-adenosyl-L-methionine = N(6),N(6),N(6)-trimethyl-L-lysyl-[protein] + 3 S-adenosyl-L-homocysteine + 3 H(+). In terms of biological role, methylates ribosomal protein L11. The polypeptide is Ribosomal protein L11 methyltransferase (Edwardsiella ictaluri (strain 93-146)).